Consider the following 370-residue polypeptide: Ornithine carbamoyltransferase, mitochondrial (370 aa).

A mitochondrion-targeting transit peptide spans 1–38 (MPSPLRTAPQPPLRAFHNPPALRRLYSSTSHSAATPAT). Carbamoyl phosphate is bound by residues 97–100 (STRT), arginine 148, histidine 175, and glutamine 178. Positions 216, 282, 286, and 287 each coordinate L-ornithine. Catalysis depends on cysteine 324, which acts as the Proton acceptor. Residues 324 to 325 (CL) and arginine 351 contribute to the carbamoyl phosphate site.

It belongs to the aspartate/ornithine carbamoyltransferase superfamily. OTCase family. In terms of assembly, homotrimer.

The protein resides in the mitochondrion matrix. It carries out the reaction carbamoyl phosphate + L-ornithine = L-citrulline + phosphate + H(+). The protein operates within amino-acid biosynthesis; L-arginine biosynthesis; L-arginine from L-ornithine and carbamoyl phosphate: step 1/3. The protein is Ornithine carbamoyltransferase, mitochondrial (argB) of Aspergillus niger.